Reading from the N-terminus, the 303-residue chain is 2-phospho-L-lactate transferase (303 aa).

7,8-didemethyl-8-hydroxy-5-deazariboflavin contacts are provided by Asp-48 and Lys-87.

Belongs to the CofD family. In terms of assembly, homodimer. It depends on Mg(2+) as a cofactor.

It catalyses the reaction (2S)-lactyl-2-diphospho-5'-guanosine + 7,8-didemethyl-8-hydroxy-5-deazariboflavin = oxidized coenzyme F420-0 + GMP + H(+). The protein operates within cofactor biosynthesis; coenzyme F420 biosynthesis. In terms of biological role, catalyzes the transfer of the 2-phospholactate moiety from (2S)-lactyl-2-diphospho-5'-guanosine to 7,8-didemethyl-8-hydroxy-5-deazariboflavin (FO) with the formation of oxidized coenzyme F420-0 and GMP. The protein is 2-phospho-L-lactate transferase of Methanosarcina mazei (strain ATCC BAA-159 / DSM 3647 / Goe1 / Go1 / JCM 11833 / OCM 88) (Methanosarcina frisia).